Here is a 487-residue protein sequence, read N- to C-terminus: Proline--tRNA ligase (487 aa).

The protein belongs to the class-II aminoacyl-tRNA synthetase family. ProS type 3 subfamily. In terms of assembly, homodimer.

The protein resides in the cytoplasm. The catalysed reaction is tRNA(Pro) + L-proline + ATP = L-prolyl-tRNA(Pro) + AMP + diphosphate. Its function is as follows. Catalyzes the attachment of proline to tRNA(Pro) in a two-step reaction: proline is first activated by ATP to form Pro-AMP and then transferred to the acceptor end of tRNA(Pro). This chain is Proline--tRNA ligase, found in Pyrobaculum calidifontis (strain DSM 21063 / JCM 11548 / VA1).